The primary structure comprises 111 residues: Large ribosomal subunit protein uL22 (111 aa).

It belongs to the universal ribosomal protein uL22 family. As to quaternary structure, part of the 50S ribosomal subunit.

In terms of biological role, this protein binds specifically to 23S rRNA; its binding is stimulated by other ribosomal proteins, e.g. L4, L17, and L20. It is important during the early stages of 50S assembly. It makes multiple contacts with different domains of the 23S rRNA in the assembled 50S subunit and ribosome. Its function is as follows. The globular domain of the protein is located near the polypeptide exit tunnel on the outside of the subunit, while an extended beta-hairpin is found that lines the wall of the exit tunnel in the center of the 70S ribosome. In Acholeplasma laidlawii, this protein is Large ribosomal subunit protein uL22.